The chain runs to 444 residues: Methylenetetrahydrofolate--tRNA-(uracil-5-)-methyltransferase TrmFO (444 aa).

10-15 (GAGLAG) provides a ligand contact to FAD.

The protein belongs to the MnmG family. TrmFO subfamily. It depends on FAD as a cofactor.

Its subcellular location is the cytoplasm. It catalyses the reaction uridine(54) in tRNA + (6R)-5,10-methylene-5,6,7,8-tetrahydrofolate + NADH + H(+) = 5-methyluridine(54) in tRNA + (6S)-5,6,7,8-tetrahydrofolate + NAD(+). The catalysed reaction is uridine(54) in tRNA + (6R)-5,10-methylene-5,6,7,8-tetrahydrofolate + NADPH + H(+) = 5-methyluridine(54) in tRNA + (6S)-5,6,7,8-tetrahydrofolate + NADP(+). Functionally, catalyzes the folate-dependent formation of 5-methyl-uridine at position 54 (M-5-U54) in all tRNAs. This chain is Methylenetetrahydrofolate--tRNA-(uracil-5-)-methyltransferase TrmFO, found in Streptococcus suis (strain 98HAH33).